A 433-amino-acid polypeptide reads, in one-letter code: D-amino acid dehydrogenase (433 aa).

3–17 (VLVLGSGVIGTTSAY) contacts FAD.

This sequence belongs to the DadA oxidoreductase family. Requires FAD as cofactor.

The enzyme catalyses a D-alpha-amino acid + A + H2O = a 2-oxocarboxylate + AH2 + NH4(+). Its function is as follows. Oxidative deamination of D-amino acids. The sequence is that of D-amino acid dehydrogenase from Pseudomonas syringae pv. tomato (strain ATCC BAA-871 / DC3000).